A 102-amino-acid polypeptide reads, in one-letter code: Cytochrome c oxidase subunit 6a, mitochondrial (102 aa).

A mitochondrion-targeting transit peptide spans 1-36 (MATAIVRSALSRAVTRAAPKTSVAPKRNFSSSAGHD).

The protein belongs to the cytochrome c oxidase subunit 6A (TC 3.D.4.11) family.

The protein localises to the mitochondrion inner membrane. Its function is as follows. This protein is one of the nuclear-coded polypeptide chains of cytochrome c oxidase, the terminal oxidase in mitochondrial electron transport. In Arabidopsis thaliana (Mouse-ear cress), this protein is Cytochrome c oxidase subunit 6a, mitochondrial (COX6A).